The sequence spans 302 residues: 4-hydroxy-tetrahydrodipicolinate synthase (302 aa).

Thr46 is a pyruvate binding site. The active-site Proton donor/acceptor is the Tyr134. The Schiff-base intermediate with substrate role is filled by Lys162. Pyruvate is bound at residue Val204.

This sequence belongs to the DapA family. Homotetramer; dimer of dimers.

The protein resides in the cytoplasm. The catalysed reaction is L-aspartate 4-semialdehyde + pyruvate = (2S,4S)-4-hydroxy-2,3,4,5-tetrahydrodipicolinate + H2O + H(+). It participates in amino-acid biosynthesis; L-lysine biosynthesis via DAP pathway; (S)-tetrahydrodipicolinate from L-aspartate: step 3/4. In terms of biological role, catalyzes the condensation of (S)-aspartate-beta-semialdehyde [(S)-ASA] and pyruvate to 4-hydroxy-tetrahydrodipicolinate (HTPA). This is 4-hydroxy-tetrahydrodipicolinate synthase from Xanthomonas campestris pv. campestris (strain ATCC 33913 / DSM 3586 / NCPPB 528 / LMG 568 / P 25).